The sequence spans 491 residues: Zinc finger protein 655 (491 aa).

The segment at M1–E52 is disordered. Over residues V15–C26 the composition is skewed to polar residues. Q60 is modified (phosphoserine). Glycyl lysine isopeptide (Lys-Gly) (interchain with G-Cter in SUMO2) cross-links involve residues K77, K190, and K201. 6 C2H2-type zinc fingers span residues Y212 to H234, Y240 to H262, Y303 to H325, C330 to H353, Y380 to H402, and H408 to H430.

It belongs to the krueppel C2H2-type zinc-finger protein family. Interacts with VAV1 and CDK4. Interacts with INTS13; promoting association with the integrator complex.

The protein localises to the nucleus. Its function is as follows. Probable transcription factor. The polypeptide is Zinc finger protein 655 (Homo sapiens (Human)).